Reading from the N-terminus, the 503-residue chain is Probable cytosol aminopeptidase (503 aa).

Mn(2+)-binding residues include K274 and D279. K286 is an active-site residue. D297, D356, and E358 together coordinate Mn(2+). R360 is an active-site residue.

This sequence belongs to the peptidase M17 family. Mn(2+) is required as a cofactor.

It localises to the cytoplasm. The enzyme catalyses Release of an N-terminal amino acid, Xaa-|-Yaa-, in which Xaa is preferably Leu, but may be other amino acids including Pro although not Arg or Lys, and Yaa may be Pro. Amino acid amides and methyl esters are also readily hydrolyzed, but rates on arylamides are exceedingly low.. The catalysed reaction is Release of an N-terminal amino acid, preferentially leucine, but not glutamic or aspartic acids.. In terms of biological role, presumably involved in the processing and regular turnover of intracellular proteins. Catalyzes the removal of unsubstituted N-terminal amino acids from various peptides. The sequence is that of Probable cytosol aminopeptidase from Paraburkholderia phymatum (strain DSM 17167 / CIP 108236 / LMG 21445 / STM815) (Burkholderia phymatum).